The chain runs to 83 residues: MKASMFLALAGLVLLFVVGYASESEEKEFPIELLSKIFAVDVFKGEERGCKGFGDSCTPGKNECCPNHACSNKHKWCKAYLGK.

Positions 1-21 are cleaved as a signal peptide; that stretch reads MKASMFLALAGLVLLFVVGYA. The propeptide occupies 22–48; that stretch reads SESEEKEFPIELLSKIFAVDVFKGEER. 3 cysteine pairs are disulfide-bonded: Cys50/Cys65, Cys57/Cys70, and Cys64/Cys77. A Leucine amide modification is found at Leu81.

Belongs to the neurotoxin 10 (Hwtx-1) family. 15 (Hntx-3) subfamily. As to quaternary structure, monomer. In terms of tissue distribution, expressed by the venom gland.

Its subcellular location is the secreted. In terms of biological role, lethal neurotoxin. Selectively blocks tetrodotoxin-sensitive voltage-gated sodium channels (Nav). Does not affect tetrodotoxin-resistant voltage-gated sodium channels or calcium channels. The protein is Mu-theraphotoxin-Hhn2o of Cyriopagopus hainanus (Chinese bird spider).